The primary structure comprises 372 residues: Cytochrome b (372 aa).

The next 4 helical transmembrane spans lie at 25-45, 69-90, 105-125, and 170-190; these read FGSMLLTCLILQITTGFFLAI, WIMQNLHAIGASMFFICIYIHI, WLSGTALLILLMATAFFGYVL, and FFALHFILPFTIISMSSIHII. 2 residues coordinate heme b: histidine 75 and histidine 89. Heme b is bound by residues histidine 174 and histidine 188. Histidine 193 lines the a ubiquinone pocket. The next 4 membrane-spanning stretches (helical) occupy residues 218-238, 280-300, 312-332, and 339-358; these read YKDMLMITIMITFMLLILSFS, LGGTLALFMSIAILMTAPFTH, LTQTMFWILIATFITITWTAT, and FISISQVTSIIYFSFFIINP.

It belongs to the cytochrome b family. The cytochrome bc1 complex contains 3 respiratory subunits (MT-CYB, CYC1 and UQCRFS1), 2 core proteins (UQCRC1 and UQCRC2) and probably 6 low-molecular weight proteins. Heme b is required as a cofactor.

Its subcellular location is the mitochondrion inner membrane. Component of the ubiquinol-cytochrome c reductase complex (complex III or cytochrome b-c1 complex) that is part of the mitochondrial respiratory chain. The b-c1 complex mediates electron transfer from ubiquinol to cytochrome c. Contributes to the generation of a proton gradient across the mitochondrial membrane that is then used for ATP synthesis. The chain is Cytochrome b (MT-CYB) from Dendroaspis polylepis polylepis (Black mamba).